The chain runs to 414 residues: 26S proteasome regulatory subunit 8 homolog (414 aa).

197–204 contacts ATP; that stretch reads GPPGTGKT.

It belongs to the AAA ATPase family.

The protein localises to the cytoplasm. It localises to the nucleus. In terms of biological role, the 26S proteasome is involved in the ATP-dependent degradation of ubiquitinated proteins. The regulatory (or ATPase) complex confers ATP dependency and substrate specificity to the 26S complex. The polypeptide is 26S proteasome regulatory subunit 8 homolog (Naegleria fowleri (Brain eating amoeba)).